Here is a 1007-residue protein sequence, read N- to C-terminus: Protein vav-1 (1007 aa).

In terms of domain architecture, Calponin-homology (CH) spans 37–151 (CDLWIGCARW…TLSFLSHTKE (115 aa)). An AC region spans residues 151 to 239 (ESLSRGVDPF…ENDLQNTPTL (89 aa)). The segment at 153-176 (LSRGVDPFPDTDNNQEGTSNGSEF) is disordered. The segment covering 163-174 (TDNNQEGTSNGS) has biased composition (polar residues). A phosphotyrosine mark is found at Tyr-183, Tyr-200, and Tyr-217. The DH domain occupies 240-437 (KRNRCIRELY…EDVCNYINEE (198 aa)). One can recognise a PH domain in the interval 470–598 (RVNLDGEVKM…WMTALLLSKS (129 aa)). Residues 610–664 (NHKVAFHSFRVDVKNPATCDVCDKLMKGLQYQGYKCESCNMSMHKECLGLKKCEA) form a Phorbol-ester/DAG-type zinc finger. An SH3 1 domain is found at 688-750 (HEGDIVVANS…HLDHVSQSRT (63 aa)). A disordered region spans residues 778–817 (LPNKLLSDGSSRSLSGPHGSRSSRNSSSSTINGSMDSVPR). A compositionally biased stretch (low complexity) spans 782–814 (LLSDGSSRSLSGPHGSRSSRNSSSSTINGSMDS). One can recognise an SH2 domain in the interval 831-925 (WYMGEMERAK…ALDTCLKNPY (95 aa)). Residues 926–991 (SQCKVFKAVH…PLSYVKPYDP (66 aa)) form the SH3 2 domain.

In terms of processing, GEF activity is regulated by phosphorylation on tyrosine residues. In terms of tissue distribution, strong expression in the pharynx, proximal gonad, spermatheca, intestine and rectal epithelia.

Its function is as follows. Acts as a guanine nucleotide exchange factor (GEF) for Rho GTPase. Has a critical roles in the generation of rhythmic behaviors: feeding, defecation and ovulation by dynamically regulating the concentration of intracellular calcium. Plays a role in male tail tip morphogenesis. This chain is Protein vav-1, found in Caenorhabditis elegans.